The primary structure comprises 91 residues: Acylphosphatase (91 aa).

The 88-residue stretch at 3-90 (QYRIIVDGRV…EGHHRFSIVY (88 aa)) folds into the Acylphosphatase-like domain. Catalysis depends on residues Arg-18 and Asn-36.

The protein belongs to the acylphosphatase family.

It carries out the reaction an acyl phosphate + H2O = a carboxylate + phosphate + H(+). The sequence is that of Acylphosphatase (acyP) from Bacillus subtilis (strain 168).